The chain runs to 474 residues: uncharacterized protein (474 aa).

A helical membrane pass occupies residues 3–23 (LTLWLVLGAVGVGAVGTGVGF). Residues 171–296 (VSDGSSSKTR…KETKDRTKVD (126 aa)) are disordered. Basic residues predominate over residues 180-210 (RTPKKTKTSKKKPIKKKSSKSKSSKGSKKQK). Positions 231–253 (TRSQSKQQKGQEQATDQTDSEGV) are enriched in polar residues. A compositionally biased stretch (acidic residues) spans 257-266 (EGADNTDTEL). The span at 267-281 (VETTAETTEQEATTK) shows a compositional bias: low complexity. The segment covering 282 to 296 (STKDTKETKDRTKVD) has biased composition (basic and acidic residues).

It is found in the membrane. This is an uncharacterized protein from Mycoplasma pneumoniae (strain ATCC 29342 / M129 / Subtype 1) (Mycoplasmoides pneumoniae).